A 398-amino-acid chain; its full sequence is Phosphoglycerate kinase (398 aa).

Substrate contacts are provided by residues 21–23 (DFN), Arg-36, 59–62 (HFGR), Arg-117, and Arg-150. ATP is bound by residues Lys-200, Glu-321, and 351 to 354 (GGDS).

It belongs to the phosphoglycerate kinase family. Monomer.

Its subcellular location is the cytoplasm. The catalysed reaction is (2R)-3-phosphoglycerate + ATP = (2R)-3-phospho-glyceroyl phosphate + ADP. Its pathway is carbohydrate degradation; glycolysis; pyruvate from D-glyceraldehyde 3-phosphate: step 2/5. The polypeptide is Phosphoglycerate kinase (Wolbachia pipientis wMel).